The chain runs to 385 residues: Telomere-binding protein subunit beta (385 aa).

Disordered stretches follow at residues 231–329 and 343–385; these read AADH…ALTT and WHEK…AAKK. Residues 242–262 are compositionally biased toward basic residues; it reads GGAKGKGKAAAKAAKGKKLSA. Basic and acidic residues predominate over residues 263 to 280; sequence KKGDSSAADVRKSVDKIV. Composition is skewed to low complexity over residues 295 to 304, 312 to 326, and 365 to 375; these read KSQAPAAGKS, KAVPSAPSPSGKKSA, and GKASATSGKAS. Over residues 376–385 the composition is skewed to basic residues; sequence KASKKTAAKK.

Heterodimer of an alpha and a beta subunit.

The protein resides in the nucleus. The protein localises to the chromosome. It localises to the telomere. Functionally, may function as protective capping of the single-stranded telomeric overhang. May also participate in telomere length regulation during DNA replication. Binds specifically to the T4G4-containing extension on the 3'strand and protects this region of the telomere from nuclease digestion and chemical modification. This Sterkiella nova (Ciliate) protein is Telomere-binding protein subunit beta (MAC-41A).